An 888-amino-acid polypeptide reads, in one-letter code: Valine--tRNA ligase (888 aa).

The short motif at 43–53 (PFTSGTLHLGH) is the 'HIGH' region element. The 'KMSKS' region motif lies at 534 to 538 (KMSKS). Lysine 537 contacts ATP.

This sequence belongs to the class-I aminoacyl-tRNA synthetase family. ValS type 2 subfamily.

The protein resides in the cytoplasm. The enzyme catalyses tRNA(Val) + L-valine + ATP = L-valyl-tRNA(Val) + AMP + diphosphate. Its function is as follows. Catalyzes the attachment of valine to tRNA(Val). As ValRS can inadvertently accommodate and process structurally similar amino acids such as threonine, to avoid such errors, it has a 'posttransfer' editing activity that hydrolyzes mischarged Thr-tRNA(Val) in a tRNA-dependent manner. The sequence is that of Valine--tRNA ligase from Thermococcus kodakarensis (strain ATCC BAA-918 / JCM 12380 / KOD1) (Pyrococcus kodakaraensis (strain KOD1)).